A 173-amino-acid chain; its full sequence is Propanediol dehydratase small subunit (173 aa).

This sequence belongs to the diol/glycerol dehydratase small subunit family. The propanediol dehydratase enzyme is a heterotrimeric complex composed of a large (PduC), a medium (PduD) and a small (PduE) subunit. Adenosylcob(III)alamin is required as a cofactor.

Its subcellular location is the bacterial microcompartment. The catalysed reaction is propane-1,2-diol = propanal + H2O. It participates in polyol metabolism; 1,2-propanediol degradation. With respect to regulation, inhibited by glycerol. Functionally, part of the PduCDE complex that catalyzes the dehydration of 1,2-propanediol (1,2-PD) to propionaldehyde. Required for S.typhimurium growth on 1,2-PD as the sole carbon and energy source. Localized in the bacterial microcompartment (BMC) dedicated to 1,2-PD degradation. In terms of biological role, the 1,2-PD-specific bacterial microcompartment (BMC) concentrates low levels of 1,2-PD catabolic enzymes, concentrates volatile reaction intermediates thus enhancing pathway flux and keeps the level of toxic, mutagenic propionaldehyde low. This chain is Propanediol dehydratase small subunit, found in Salmonella typhimurium (strain LT2 / SGSC1412 / ATCC 700720).